The following is an 872-amino-acid chain: MLNVFSKIFGTRNDKEVKKYRKKADAITALESKYTDLSDDELKNEFQKLKELVQKGEKTLDNVLFQSFAITREASRRVLNMRPYDVQLIGGMVLHEGRIAEMKTGEGKTLVGSLAVSLNALEGKGVHVVTVNDYLASRDANELRPLYEFLGFSVGAVVGGLKDDEQRREQYACDITYGTNNEFGFDYLRDNMCFDIKDKVQRGHNYVIVDEVDSILIDEARTPLIISGPTNHKNSNYLKANEIALKLEKGELIEPKSAAEKPITTGDFIVDEKNRAVTLTEQGHEAVEKLFGVDNLYSIENAMLSHSLDQALKANYIFKKDVDYVVKDNQIIIVDEFTGRLSEGRRFSEGLHQALEAKEGVTIQDESQTLADITFQNYFRMYKKLAGMTGTAQTEATEFAQIYNLDVVSIPTNIPVKRIDKNDLIYKSEKEKFEAVCNKIKELHEKGQPVLVGTASIEKSEKLHKILVDKKIPHTVLNAKQHEKEGKIIADAGQKGAVTIATNMAGRGVDIKLTKEILDLGGLAIIGTERHESRRIDNQLRGRSGRQGDVGESQFYLSLEDNLLRIFGSDRIKGIMERLGIEEGEHIESRMVTRAVENAQKKVESMHFESRKHLLEYDDVANQQRKVIYSFRNDLLKPDYDITSKIDENRIEYVQNLLTEANITSGMAEDDFNYEFIVNRFLEDLHFKINVEDIKKESYEELEEHLISILKDVYDKKMSVTSLEQKSEIERILYLQILDSAWREHLYAMDTLKTGIGLRGYNQKDPLVEYKKESYNMFIELIGNIKNEIIKILFTIQLQSQEDKQKEQEALAKMKEQMEKSTEHITTNIAQEAVKNSDKKIARNEPCPCGSGLKYKQCCGKSGPKIGLAAGK.

ATP contacts are provided by residues Q87, 105–109 (GEGKT), and D510. Zn(2+)-binding residues include C847, C849, C858, and C859.

Belongs to the SecA family. As to quaternary structure, monomer and homodimer. Part of the essential Sec protein translocation apparatus which comprises SecA, SecYEG and auxiliary proteins SecDF-YajC and YidC. Zn(2+) is required as a cofactor.

It is found in the cell inner membrane. The protein resides in the cytoplasm. It catalyses the reaction ATP + H2O + cellular proteinSide 1 = ADP + phosphate + cellular proteinSide 2.. Its function is as follows. Part of the Sec protein translocase complex. Interacts with the SecYEG preprotein conducting channel. Has a central role in coupling the hydrolysis of ATP to the transfer of proteins into and across the cell membrane, serving as an ATP-driven molecular motor driving the stepwise translocation of polypeptide chains across the membrane. This Aliarcobacter butzleri (strain RM4018) (Arcobacter butzleri) protein is Protein translocase subunit SecA.